A 530-amino-acid polypeptide reads, in one-letter code: UDP-glucuronosyltransferase 2B31 (530 aa).

Residues 1 to 24 form the signal peptide; sequence MSMKWISVLLGLQLSCYFSSGSCG. K136 is modified (N6-succinyllysine). N-linked (GlcNAc...) asparagine glycosylation is present at N316. The chain crosses the membrane as a helical span at residues 495-515; it reads IGFLLACVATAIFVTTQCCLF.

It belongs to the UDP-glycosyltransferase family.

It is found in the microsome membrane. The protein resides in the endoplasmic reticulum membrane. The catalysed reaction is glucuronate acceptor + UDP-alpha-D-glucuronate = acceptor beta-D-glucuronoside + UDP + H(+). Its function is as follows. UDPGTs are of major importance in the conjugation and subsequent elimination of potentially toxic xenobiotics and endogenous compounds. This isozyme has glucuronidating capacity on phenols, opioids, and carboxylic acid-containing drugs. The sequence is that of UDP-glucuronosyltransferase 2B31 (UGT2B31) from Canis lupus familiaris (Dog).